The following is a 79-amino-acid chain: MISLLQVRDAVALNGRADAKLLSHQLSASLSMVEAMLEQLTVMGKLEKLNATACLSGSCKQCPEVQQCDTVVYRIAGGY.

4 residues coordinate iron-sulfur cluster: C54, C59, C62, and C68.

Belongs to the FeoC family.

Its function is as follows. May function as a transcriptional regulator that controls feoABC expression. The chain is Probable [Fe-S]-dependent transcriptional repressor from Photorhabdus laumondii subsp. laumondii (strain DSM 15139 / CIP 105565 / TT01) (Photorhabdus luminescens subsp. laumondii).